Consider the following 199-residue polypeptide: Recombination protein RecR (199 aa).

A C4-type zinc finger spans residues 58–73 (CSICCNITDTDPCSMC). The region spanning 81–176 (SVICVVEDPR…KVTRIAHGLP (96 aa)) is the Toprim domain.

The protein belongs to the RecR family.

May play a role in DNA repair. It seems to be involved in an RecBC-independent recombinational process of DNA repair. It may act with RecF and RecO. The chain is Recombination protein RecR from Clostridioides difficile (strain 630) (Peptoclostridium difficile).